A 237-amino-acid polypeptide reads, in one-letter code: DNA repair protein RecO (237 aa).

This sequence belongs to the RecO family.

In terms of biological role, involved in DNA repair and RecF pathway recombination. The protein is DNA repair protein RecO of Rickettsia africae (strain ESF-5).